A 95-amino-acid polypeptide reads, in one-letter code: Small ribosomal subunit protein bS6 (95 aa).

This sequence belongs to the bacterial ribosomal protein bS6 family.

Functionally, binds together with bS18 to 16S ribosomal RNA. The sequence is that of Small ribosomal subunit protein bS6 from Onion yellows phytoplasma (strain OY-M).